The sequence spans 613 residues: ATP-dependent RNA helicase DeaD (613 aa).

The Q motif signature appears at 5–33 (ITFNDLGLPEFILKAVSDLGFETPSPIQQ). The Helicase ATP-binding domain occupies 36 to 207 (IPHLLNGNDV…KRFMNDPQEV (172 aa)). Residue 49-56 (AQTGSGKT) participates in ATP binding. Positions 155–158 (DEAD) match the DEAD box motif. The Helicase C-terminal domain occupies 231–378 (KNEALLRFLE…EVELPNHLVL (148 aa)). Disordered regions lie at residues 434–476 (ILPP…PQPM) and 552–613 (AVKS…RSSF). Composition is skewed to basic and acidic residues over residues 440 to 469 (PMEK…ERKG) and 556 to 613 (DNSR…RSSF).

The protein belongs to the DEAD box helicase family. DeaD/CsdA subfamily.

Its subcellular location is the cytoplasm. It carries out the reaction ATP + H2O = ADP + phosphate + H(+). Its function is as follows. DEAD-box RNA helicase involved in various cellular processes at low temperature, including ribosome biogenesis, mRNA degradation and translation initiation. This Haemophilus influenzae (strain ATCC 51907 / DSM 11121 / KW20 / Rd) protein is ATP-dependent RNA helicase DeaD.